The following is a 513-amino-acid chain: MAIAVNRPLMLMILDGFGLGPEGEGNAISQGRLPNYRRLLAGYPHTRLRASGEAVGLPAGQMGNSEVGHLNIGAGRIVYQELTRISKAIRDGSFFSNAALVGAVRAAREHGGALHLMGLVSDGGVHSHLDHLYALLDLAKREGLERVYIHAFLDGRDVPPASAAGYLEQVEDECRQKGIGAIATIMGRYYAMDRDRRWERTARAYRALVAGEGHQASSPSEAIRASYERDITDEFVEPAVITRDGRPLATVREGDSVVFFNFRADRARQLTRAFVDRDFDAFERPGGRLDIQFVCLTQYDVTIPAPVAFPPQVLQNVLGEVIAGAGLKQLRIAETEKYAHVTFFFNGGVEEPFPGEDRLLIPSPKVATYDQKPSMSAREVTDAVLERLDKYDFIVLNFANPDMVGHTGDLAAAIAAVETVDECIGRIVQAMAERRAPLLLTADHGNAEEMREPDGEPHTAHTSNLVPFILVDDRYRGASLREGALEDVAPTVLDILHIQQPAEMTGKSLIVKG.

The Mn(2+) site is built by D15 and S65. Catalysis depends on S65, which acts as the Phosphoserine intermediate. Substrate is bound by residues H126, 156–157 (RD), R188, R194, 263–266 (RADR), and K337. 5 residues coordinate Mn(2+): D402, H406, D443, H444, and H461.

This sequence belongs to the BPG-independent phosphoglycerate mutase family. Monomer. The cofactor is Mn(2+).

It carries out the reaction (2R)-2-phosphoglycerate = (2R)-3-phosphoglycerate. It participates in carbohydrate degradation; glycolysis; pyruvate from D-glyceraldehyde 3-phosphate: step 3/5. Catalyzes the interconversion of 2-phosphoglycerate and 3-phosphoglycerate. In Moorella thermoacetica (strain ATCC 39073 / JCM 9320), this protein is 2,3-bisphosphoglycerate-independent phosphoglycerate mutase.